The sequence spans 843 residues: Eisosome protein 1 (843 aa).

The interval methionine 1–glutamate 53 is disordered. Serine 2 is modified (N-acetylserine). At serine 2 the chain carries Phosphoserine. Basic residues predominate over residues lysine 33–lysine 46. Serine 88 and serine 130 each carry phosphoserine. The disordered stretch occupies residues lysine 120 to asparagine 174. 2 stretches are compositionally biased toward polar residues: residues arginine 127–lysine 137 and threonine 163–asparagine 174. Phosphoserine occurs at positions 182, 401, 584, and 710. The interval aspartate 717–lysine 843 is disordered. A Phosphothreonine modification is found at threonine 720. The segment covering serine 752–alanine 764 has biased composition (low complexity). Phosphoserine is present on residues serine 763 and serine 775. Over residues serine 781–glutamate 797 the composition is skewed to basic and acidic residues. The span at isoleucine 798–leucine 810 shows a compositional bias: polar residues. A phosphoserine mark is found at serine 816, serine 828, serine 829, and serine 838.

The protein belongs to the EIS1 family.

It is found in the cytoplasmic granule. The protein localises to the cell membrane. Its function is as follows. Required for normal formation of eisosomes, large cytoplasmic protein assemblies that localize to specialized domains on plasma membrane and mark the site of endocytosis. The sequence is that of Eisosome protein 1 (EIS1) from Saccharomyces cerevisiae (strain ATCC 204508 / S288c) (Baker's yeast).